Reading from the N-terminus, the 121-residue chain is Large ribosomal subunit protein bL20 (121 aa).

Belongs to the bacterial ribosomal protein bL20 family.

Binds directly to 23S ribosomal RNA and is necessary for the in vitro assembly process of the 50S ribosomal subunit. It is not involved in the protein synthesizing functions of that subunit. The protein is Large ribosomal subunit protein bL20 of Koribacter versatilis (strain Ellin345).